The following is a 260-amino-acid chain: Activator of 90 kDa heat shock protein ATPase homolog 2 (260 aa).

It belongs to the AHA1 family.

Its function is as follows. Co-chaperone that stimulates HSP90 ATPase activity. The protein is Activator of 90 kDa heat shock protein ATPase homolog 2 (AHSA2) of Bos taurus (Bovine).